The chain runs to 1050 residues: Inositol hexakisphosphate kinase 1 (1050 aa).

Disordered stretches follow at residues 87–117 (KITR…LSSS), 129–177 (PAIK…IQNV), 269–319 (RQEN…DNEH), and 396–423 (SDLD…NNND). Phosphoserine is present on Ser150. Over residues 156 to 173 (KQQSHQPQVLHHQTSLKP) the composition is skewed to polar residues. Basic and acidic residues predominate over residues 290-306 (ESIKEKPNTFEQDKEGE). A compositionally biased stretch (acidic residues) spans 307-316 (QADEEEDEGD). Ser396 is modified (phosphoserine). The span at 402–417 (NNGKNDTSNENKDIEV) shows a compositional bias: basic and acidic residues. At Ser469 the chain carries Phosphoserine. A compositionally biased stretch (low complexity) spans 508 to 522 (NDSYFSSSSSHNSCS). 2 disordered regions span residues 508–539 (NDSY…DSGS) and 562–625 (RKRN…PNLQ). Phosphoserine occurs at positions 537, 539, 566, 583, 589, 646, 664, and 670. A compositionally biased stretch (polar residues) spans 566 to 624 (SNTTTMGNHNARLGSSPSFLTQKSRASSHDASNTSMKTLGDSSSQASLQMDDSKVNPNL). 772-780 (PCALDLKMG) is a substrate binding site.

The protein belongs to the inositol phosphokinase (IPK) family.

The protein resides in the cytoplasm. The enzyme catalyses 1D-myo-inositol hexakisphosphate + ATP = 5-diphospho-1D-myo-inositol 1,2,3,4,6-pentakisphosphate + ADP. It catalyses the reaction 1-diphospho-1D-myo-inositol 2,3,4,5,6-pentakisphosphate + ATP + H(+) = 1,5-bis(diphospho)-1D-myo-inositol 2,3,4,6-tetrakisphosphate + ADP. Converts inositol hexakisphosphate (InsP6) to diphosphoinositol pentakisphosphate (InsP7/PP-InsP5). Involved in phosphate regulation and polyphosphate accumulation. Required for resistance to salt stress, cell wall integrity, vacuole morphogenesis, and telomere maintenance. This Saccharomyces cerevisiae (strain ATCC 204508 / S288c) (Baker's yeast) protein is Inositol hexakisphosphate kinase 1 (KCS1).